Here is a 335-residue protein sequence, read N- to C-terminus: tRNA-splicing endonuclease (335 aa).

Residues tyrosine 269, histidine 280, and lysine 311 contribute to the active site.

Belongs to the tRNA-intron endonuclease family. Archaeal long subfamily. As to quaternary structure, homodimer.

The catalysed reaction is pretRNA = a 3'-half-tRNA molecule with a 5'-OH end + a 5'-half-tRNA molecule with a 2',3'-cyclic phosphate end + an intron with a 2',3'-cyclic phosphate and a 5'-hydroxyl terminus.. Functionally, endonuclease that removes tRNA introns. Cleaves pre-tRNA at the 5'- and 3'-splice sites to release the intron. The products are an intron and two tRNA half-molecules bearing 2',3' cyclic phosphate and 5'-OH termini. Recognizes a pseudosymmetric substrate in which 2 bulged loops of 3 bases are separated by a stem of 4 bp. The chain is tRNA-splicing endonuclease from Haloarcula marismortui (strain ATCC 43049 / DSM 3752 / JCM 8966 / VKM B-1809) (Halobacterium marismortui).